A 2208-amino-acid chain; its full sequence is RNA-directed RNA polymerase L (2208 aa).

The interval Lys-26–Cys-284 is endonuclease. Mn(2+) contacts are provided by Glu-51, Asp-89, and Glu-102. Residue Lys-115 is part of the active site. In terms of domain architecture, RdRp catalytic spans Cys-1171 to Val-1367. Asp-1329 serves as a coordination point for Mg(2+).

The protein belongs to the Bunyavirales RNA polymerase family. As to quaternary structure, homomultimer; the oligomeric structure is essential for the polymerase activity. Interacts with nucleoprotein N. Interacts with protein Z; this interaction inhibits viral transcription and replication, Z partially blocks the product exit tunnel for the releasing nascent RNA product. Requires Mn(2+) as cofactor. It depends on Mg(2+) as a cofactor.

The protein localises to the virion. Its subcellular location is the host cytoplasm. It catalyses the reaction RNA(n) + a ribonucleoside 5'-triphosphate = RNA(n+1) + diphosphate. In terms of biological role, RNA-dependent RNA polymerase, which is responsible for the replication and transcription of the viral RNA genome using antigenomic RNA as an intermediate. During transcription, synthesizes subgenomic RNAs and assures their capping by a cap-snatching mechanism, which involves the endonuclease activity cleaving the host capped pre-mRNAs. These short capped RNAs are then used as primers for viral transcription. The 3'-end of subgenomic mRNAs molecules are heterogeneous and not polyadenylated. The replicase function is to direct synthesis of antigenomic and genomic RNA which are encapsidated and non capped. As a consequence of the use of the same enzyme for both transcription and replication, these mechanisms need to be well coordinated. These processes may be regulated by proteins N and Z in a dose-dependent manner. Z protein inhibits the viral polymerase L und thus the viral transcription and RNA synthesis. The protein is RNA-directed RNA polymerase L of Homo sapiens (Human).